Consider the following 207-residue polypeptide: Ras-related protein Rab-8A (207 aa).

Residues Ser17, Gly18, Val19, Gly20, Lys21, Thr22, Cys23, Ser39, and Thr40 each coordinate GTP. Residue Thr22 coordinates Mg(2+). 2 short sequence motifs (switch) span residues 31–45 (DAFNATFISTIGIDF) and 63–80 (DTAGQERFRTITTAYYRG). Mg(2+)-binding residues include Thr40 and Asp63. Positions 66, 121, 122, 124, 152, and 153 each coordinate GTP. Cys204 carries the post-translational modification Cysteine methyl ester. Cys204 carries the S-geranylgeranyl cysteine lipid modification. Residues 205–207 (VLL) constitute a propeptide, removed in mature form.

Belongs to the small GTPase superfamily. Rab family. The cofactor is Mg(2+).

It is found in the cell membrane. Its subcellular location is the golgi apparatus. The protein resides in the endosome membrane. It localises to the recycling endosome membrane. The protein localises to the cell projection. It is found in the cilium. Its subcellular location is the cytoplasmic vesicle. The protein resides in the phagosome membrane. It localises to the cytoplasm. The protein localises to the cytoskeleton. It is found in the microtubule organizing center. Its subcellular location is the centrosome. The protein resides in the centriole. It localises to the cilium basal body. The protein localises to the midbody. It carries out the reaction GTP + H2O = GDP + phosphate + H(+). Its activity is regulated as follows. Regulated by guanine nucleotide exchange factors (GEFs) which promote the exchange of bound GDP for free GTP, GTPase activating proteins (GAPs) which increase the GTP hydrolysis activity, and GDP dissociation inhibitors (GDIs) which inhibit the dissociation of the nucleotide from the GTPase. Activated in response to insulin. Its function is as follows. The small GTPases Rab are key regulators of intracellular membrane trafficking, from the formation of transport vesicles to their fusion with membranes. Rabs cycle between an inactive GDP-bound form and an active GTP-bound form that is able to recruit to membranes different sets of downstream effectors directly responsible for vesicle formation, movement, tethering and fusion. RAB8A is involved in polarized vesicular trafficking and neurotransmitter release. Together with RAB11A, RAB3IP, the exocyst complex, PARD3, PRKCI, ANXA2, CDC42 and DNMBP promotes transcytosis of PODXL to the apical membrane initiation sites (AMIS), apical surface formation and lumenogenesis. Regulates the compacted morphology of the Golgi. Together with MYO5B and RAB11A participates in epithelial cell polarization. Also involved in membrane trafficking to the cilium and ciliogenesis. Together with MICALL2, may also regulate adherens junction assembly. May play a role in insulin-induced transport to the plasma membrane of the glucose transporter GLUT4 and therefore play a role in glucose homeostasis. Involved in autophagy. Participates in the export of a subset of neosynthesized proteins through a Rab8-Rab10-Rab11-dependent endososomal export route. Targeted to and stabilized on stressed lysosomes through LRRK2 phosphorylation. Suppresses stress-induced lysosomal enlargement through EHBP1 and EHNP1L1 effector proteins. The chain is Ras-related protein Rab-8A (RAB8A) from Gallus gallus (Chicken).